A 545-amino-acid polypeptide reads, in one-letter code: Serine/threonine-protein kinase PAK 1 (545 aa).

Residues 1–77 form a disordered region; the sequence is MSNNGLDIQD…KEKERPEISL (77 aa). Ser-2 is modified (N-acetylserine). At Ser-21 the chain carries Phosphoserine; by PKB and autocatalysis. At Ser-57 the chain carries Phosphoserine; by autocatalysis. The span at 68–77 shows a compositional bias: basic and acidic residues; it reads KEKERPEISL. Positions 70–140 are autoregulatory region; that stretch reads KERPEISLPS…YNSKKTSNSQ (71 aa). The CRIB domain occupies 75 to 88; the sequence is ISLPSDFEHTIHVG. The segment at 75-105 is GTPase-binding; that stretch reads ISLPSDFEHTIHVGFDAVTGEFTGMPEQWAR. Phosphothreonine; by OXSR1 is present on Thr-84. Ser-115 bears the Phosphoserine mark. Tyr-131 and Tyr-142 each carry phosphotyrosine. Ser-144 carries the post-translational modification Phosphoserine; by autocatalysis. Residue Ser-149 is modified to Phosphoserine. Phosphotyrosine; by JAK2 is present on Tyr-153. A disordered region spans residues 159–198; the sequence is LNVKAVSETPAVPPVSEDEDDDDDDATPPPVIAPRPEHTK. Ser-174 is modified (phosphoserine). Over residues 174–184 the composition is skewed to acidic residues; the sequence is SEDEDDDDDDA. Thr-185 carries the post-translational modification Phosphothreonine. A Phosphoserine; by autocatalysis modification is found at Ser-199. Tyr-201 is modified (phosphotyrosine; by JAK2). A Phosphoserine modification is found at Ser-204. Residues 211 to 251 form a disordered region; that stretch reads VTPTRDVATSPISPTENNTTPPDALTRNTEKQKKKPKMSDE. Thr-212 and Thr-219 each carry phosphothreonine. A phosphoserine mark is found at Ser-220 and Ser-223. Polar residues predominate over residues 220 to 231; the sequence is SPISPTENNTTP. Residues Thr-225, Thr-229, and Thr-230 each carry the phosphothreonine modification. Residues 270-521 enclose the Protein kinase domain; the sequence is YTRFEKIGQG…AKELLQHQFL (252 aa). Residue 276 to 284 coordinates ATP; it reads IGQGASGTV. Position 285 is a phosphotyrosine; by JAK2 (Tyr-285). Residues Lys-299 and 345-347 contribute to the ATP site; that span reads EYL. Asp-389 functions as the Proton acceptor in the catalytic mechanism. Phosphothreonine; by autocatalysis, BRSK2 and PDPK1 is present on Thr-423.

Belongs to the protein kinase superfamily. STE Ser/Thr protein kinase family. STE20 subfamily. Homodimer; homodimerization results in autoinhibition. Active as monomer. Interacts with GIT1. Component of cytoplasmic complexes, which also contains PXN, ARHGEF7 and GIT1. Interacts with NISCH. Interacts with DVL1; mediates the formation of a DVL1, MUSK and PAK1 ternary complex involved in AChR clustering. Binds to the caspase-cleaved p110 isoform of CDC2L1 and CDC2L2, p110C, but not the full-length proteins. Interacts with ARHGEF7. Interacts tightly with GTP-bound but not GDP-bound CDC42/P21 and RAC1. Interacts with SCRIB. Interacts with PDPK1. Interacts (via kinase domain) with RAF1. Interacts with NCK1 and NCK2. Interacts with TBCB. Interacts with BRSK2. Interacts with SNAI1. Interacts with CIB1 isoform 2. Interacts with CIB1 (via N-terminal region); the interaction is direct, promotes PAK1 activity and occurs in a calcium-dependent manner. Interacts with INPP5K. Interacts with gamma-tubulin. Interacts with RHOU; the interaction promotes PAK1 activation. The cofactor is Mg(2+). In terms of processing, autophosphorylated in trans, meaning that in a dimer, one kinase molecule phosphorylates the other one. Activated by autophosphorylation at Thr-423 in response to a conformation change, triggered by interaction with GTP-bound CDC42 or RAC1. Activated by phosphorylation at Thr-423 by BRSK2 and by PDPK1. Phosphorylated by JAK2 in response to PRL; this increases PAK1 kinase activity. Phosphorylated at Ser-21 by PKB/AKT; this reduces interaction with NCK1 and association with focal adhesion sites. Upon DNA damage, phosphorylated at Thr-212 and translocates to the nucleoplasm. Phosphorylated at tyrosine residues, which can be enhanced by NTN1. As to expression, overexpressed in gastric cancer cells and tissues (at protein level).

The protein localises to the cytoplasm. It is found in the cell junction. It localises to the focal adhesion. The protein resides in the cell projection. Its subcellular location is the lamellipodium. The protein localises to the cell membrane. It is found in the ruffle membrane. It localises to the invadopodium. The protein resides in the nucleus. Its subcellular location is the nucleoplasm. The protein localises to the chromosome. It is found in the cytoskeleton. It localises to the microtubule organizing center. The protein resides in the centrosome. It carries out the reaction L-seryl-[protein] + ATP = O-phospho-L-seryl-[protein] + ADP + H(+). It catalyses the reaction L-threonyl-[protein] + ATP = O-phospho-L-threonyl-[protein] + ADP + H(+). Activated by binding small G proteins. Binding of GTP-bound CDC42 or RAC1 to the autoregulatory region releases monomers from the autoinhibited dimer, and enables activation by phosphorylation of Thr-423. Phosphorylation of Thr-84 by OXSR1 inhibits activation. Its function is as follows. Protein kinase involved in intracellular signaling pathways downstream of integrins and receptor-type kinases that plays an important role in cytoskeleton dynamics, in cell adhesion, migration, proliferation, apoptosis, mitosis, and in vesicle-mediated transport processes. Can directly phosphorylate BAD and protects cells against apoptosis. Activated by interaction with CDC42 and RAC1. Functions as a GTPase effector that links the Rho-related GTPases CDC42 and RAC1 to the JNK MAP kinase pathway. Phosphorylates and activates MAP2K1, and thereby mediates activation of downstream MAP kinases. Involved in the reorganization of the actin cytoskeleton, actin stress fibers and of focal adhesion complexes. Phosphorylates the tubulin chaperone TBCB and thereby plays a role in the regulation of microtubule biogenesis and organization of the tubulin cytoskeleton. Plays a role in the regulation of insulin secretion in response to elevated glucose levels. Part of a ternary complex that contains PAK1, DVL1 and MUSK that is important for MUSK-dependent regulation of AChR clustering during the formation of the neuromuscular junction (NMJ). Activity is inhibited in cells undergoing apoptosis, potentially due to binding of CDC2L1 and CDC2L2. Phosphorylates MYL9/MLC2. Phosphorylates RAF1 at 'Ser-338' and 'Ser-339' resulting in: activation of RAF1, stimulation of RAF1 translocation to mitochondria, phosphorylation of BAD by RAF1, and RAF1 binding to BCL2. Phosphorylates SNAI1 at 'Ser-246' promoting its transcriptional repressor activity by increasing its accumulation in the nucleus. In podocytes, promotes NR3C2 nuclear localization. Required for atypical chemokine receptor ACKR2-induced phosphorylation of LIMK1 and cofilin (CFL1) and for the up-regulation of ACKR2 from endosomal compartment to cell membrane, increasing its efficiency in chemokine uptake and degradation. In synapses, seems to mediate the regulation of F-actin cluster formation performed by SHANK3, maybe through CFL1 phosphorylation and inactivation. Plays a role in RUFY3-mediated facilitating gastric cancer cells migration and invasion. In response to DNA damage, phosphorylates MORC2 which activates its ATPase activity and facilitates chromatin remodeling. In neurons, plays a crucial role in regulating GABA(A) receptor synaptic stability and hence GABAergic inhibitory synaptic transmission through its role in F-actin stabilization. In hippocampal neurons, necessary for the formation of dendritic spines and excitatory synapses; this function is dependent on kinase activity and may be exerted by the regulation of actomyosin contractility through the phosphorylation of myosin II regulatory light chain (MLC). Along with GIT1, positively regulates microtubule nucleation during interphase. Phosphorylates FXR1, promoting its localization to stress granules and activity. Phosphorylates ILK on 'Thr-173' and 'Ser-246', promoting nuclear export of ILK. This is Serine/threonine-protein kinase PAK 1 from Homo sapiens (Human).